The following is a 317-amino-acid chain: Putative HTH-type transcriptional regulatory protein NP_1320A (317 aa).

The 58-residue stretch at 132 to 189 folds into the HTH cro/C1-type domain; the sequence is LSDIRSQEDMSLGKLANELGVSRRTVSKYEDGMSASVEVAAELEEIFDRKLASPVEVL. Positions 143-162 form a DNA-binding region, H-T-H motif; sequence LGKLANELGVSRRTVSKYED.

The chain is Putative HTH-type transcriptional regulatory protein NP_1320A from Natronomonas pharaonis (strain ATCC 35678 / DSM 2160 / CIP 103997 / JCM 8858 / NBRC 14720 / NCIMB 2260 / Gabara) (Halobacterium pharaonis).